Here is a 184-residue protein sequence, read N- to C-terminus: Small ribosomal subunit protein uS4 (184 aa).

The S4 RNA-binding domain occupies 108-172 (RRLQTQVHRL…SPMTKESHPE (65 aa)). The interval 163-184 (SPMTKESHPERPAQIAASVVEE) is disordered.

It belongs to the universal ribosomal protein uS4 family. Part of the 30S ribosomal subunit. Contacts protein S5. The interaction surface between S4 and S5 is involved in control of translational fidelity.

One of the primary rRNA binding proteins, it binds directly to 16S rRNA where it nucleates assembly of the body of the 30S subunit. In terms of biological role, with S5 and S12 plays an important role in translational accuracy. The protein is Small ribosomal subunit protein uS4 of Methanococcoides burtonii (strain DSM 6242 / NBRC 107633 / OCM 468 / ACE-M).